The primary structure comprises 163 residues: Nitrogen regulatory protein (163 aa).

The PTS EIIA type-2 domain maps to 12 to 156 (SVLNRECTRS…EELYQIITDT (145 aa)). Catalysis depends on His73, which acts as the Tele-phosphohistidine intermediate.

It is found in the cytoplasm. Seems to have a role in regulating nitrogen assimilation. This is Nitrogen regulatory protein (ptsN) from Escherichia coli (strain K12).